Reading from the N-terminus, the 355-residue chain is Zinc finger A20 and AN1 domain-containing stress-associated protein 3 (355 aa).

Residues 199 to 233 (AGQPVLCASGCGFYGNPATLDMCSVCYRQHCLLNG) form an A20-type zinc finger. The Zn(2+) site is built by cysteine 205, cysteine 209, cysteine 221, cysteine 224, cysteine 295, cysteine 298, cysteine 309, cysteine 311, cysteine 316, histidine 319, histidine 325, and cysteine 327. The segment at 289–335 (KAPANRCASCKKKVGLLGFACRCGATYCGTHRYPEKHACGFDFKGAS) adopts an AN1-type zinc-finger fold.

May be involved in environmental stress response. This chain is Zinc finger A20 and AN1 domain-containing stress-associated protein 3 (SAP3), found in Oryza sativa subsp. japonica (Rice).